A 162-amino-acid chain; its full sequence is B-box zinc finger protein 23 (162 aa).

8 residues coordinate Zn(2+): Cys5, Cys8, Cys28, His33, Cys63, Cys66, Cys86, and His91. The B box-type 1; atypical zinc finger occupies 5–47 (CEVCEKAEAEVLCCSDEAVLCKPCDIKVHEANKLFQRHHRVAL). The segment at 63-101 (CDICQERKGYFFCLEDRAMLCNDCDEAIHTCNSHQRFLL) adopts a B box-type 2; atypical zinc-finger fold. Residues 137–162 (QYSSEETEAGNSGEIVHKNPSVILSP) form a disordered region.

The protein resides in the nucleus. In terms of biological role, probable transcription factor that may be involved in seedling photomorphogenesis. The chain is B-box zinc finger protein 23 from Arabidopsis thaliana (Mouse-ear cress).